The following is a 976-amino-acid chain: Vacuolar membrane protease (976 aa).

Topologically, residues 1-15 (MKLKSVFRSVLKYRK) are cytoplasmic. Residues 16 to 36 (TNLSLLLLITYSIITLLYIFD) form a helical membrane-spanning segment. At 37–359 (HERYKLNLPK…KFFVISAKTL (323 aa)) the chain is on the vacuolar side. 2 N-linked (GlcNAc...) asparagine glycosylation sites follow: Asn96 and Asn121. Positions 156 and 168 each coordinate Zn(2+). Asn189 is a glycosylation site (N-linked (GlcNAc...) asparagine). The active-site Proton acceptor is the Glu200. Glu201 is a binding site for Zn(2+). N-linked (GlcNAc...) asparagine glycans are attached at residues Asn212 and Asn217. Positions 226 and 300 each coordinate Zn(2+). A helical transmembrane segment spans residues 360 to 380 (FYWNCIFLLVSPVVAIGLYLI). Residues 381–392 (SRDRMTWKSHSW) are Cytoplasmic-facing. A helical transmembrane segment spans residues 393–412 (LSWTRFPLSLAAGIIVQKLF). The Vacuolar portion of the chain corresponds to 413 to 428 (SNDIIRSNPLTFSRNY). A helical membrane pass occupies residues 429–449 (FWPISAFFTQVIFTSYVLINC). Topologically, residues 450 to 461 (SNFFFPCADMKS) are cytoplasmic. The chain crosses the membrane as a helical span at residues 462–482 (LSIIELFIILWTILLFTSKLL). Residues 483–496 (YSSDYRYTGLYPLS) lie on the Vacuolar side of the membrane. The chain crosses the membrane as a helical span at residues 497 to 517 (IFFLLSTIAAILRLLALALGM). The Cytoplasmic portion of the chain corresponds to 518–627 (RTRKRLGREC…NSLKLEYTDY (110 aa)). Positions 528-610 (RDHHSNYSSH…PLLKGSNSME (83 aa)) are disordered. The span at 549–558 (NLEQPQDQFT) shows a compositional bias: polar residues. The span at 559 to 570 (SSQDDQASIQDD) shows a compositional bias: low complexity. Positions 582 to 601 (NVDEDHGMDSSSQQHDERVP) are enriched in basic and acidic residues. The chain crosses the membrane as a helical span at residues 628 to 648 (AWIIQFLLIVPIPSFILFNSV). The Vacuolar segment spans residues 649–668 (DVIMDALNHTVQEGSKATFD). N-linked (GlcNAc...) asparagine glycosylation is present at Asn656. The helical transmembrane segment at 669 to 689 (VLRFGMVGSILMALPILPFFY) threads the bilayer. At 690-692 (KVN) the chain is on the cytoplasmic side. A helical membrane pass occupies residues 693-713 (YITISLTALLFLISASKTLLV). Over 714 to 976 (HPFTNSNPLK…LVIVKDAIIL (263 aa)) the chain is Vacuolar. Asn768, Asn796, Asn811, Asn866, and Asn937 each carry an N-linked (GlcNAc...) asparagine glycan.

This sequence belongs to the peptidase M28 family. Zn(2+) serves as cofactor.

The protein localises to the vacuole membrane. May be involved in vacuolar sorting and osmoregulation. This chain is Vacuolar membrane protease, found in Saccharomyces cerevisiae (strain YJM789) (Baker's yeast).